We begin with the raw amino-acid sequence, 394 residues long: Elongation factor Tu (394 aa).

Residues Lys10–Lys204 form the tr-type G domain. The segment at Gly19 to Thr26 is G1. Residue Gly19–Thr26 participates in GTP binding. Mg(2+) is bound at residue Thr26. The segment at Gly60 to Asn64 is G2. The tract at residues Asp81 to Gly84 is G3. GTP contacts are provided by residues Asp81–His85 and Asn136–Asp139. A G4 region spans residues Asn136–Asp139. The tract at residues Ser174–Leu176 is G5.

The protein belongs to the TRAFAC class translation factor GTPase superfamily. Classic translation factor GTPase family. EF-Tu/EF-1A subfamily. Monomer.

It is found in the cytoplasm. It catalyses the reaction GTP + H2O = GDP + phosphate + H(+). In terms of biological role, GTP hydrolase that promotes the GTP-dependent binding of aminoacyl-tRNA to the A-site of ribosomes during protein biosynthesis. The protein is Elongation factor Tu of Buchnera aphidicola subsp. Acyrthosiphon pisum (strain 5A).